The primary structure comprises 217 residues: Ribosomal RNA small subunit methyltransferase G (217 aa).

S-adenosyl-L-methionine contacts are provided by residues glycine 79, leucine 84, 102 to 104, 130 to 131, and arginine 144; these read DST and VE.

The protein belongs to the methyltransferase superfamily. RNA methyltransferase RsmG family.

Its subcellular location is the cytoplasm. Specifically methylates the N7 position of a guanine in 16S rRNA. The sequence is that of Ribosomal RNA small subunit methyltransferase G from Chlorobaculum tepidum (strain ATCC 49652 / DSM 12025 / NBRC 103806 / TLS) (Chlorobium tepidum).